A 305-amino-acid chain; its full sequence is CRISPR-associated endonuclease Cas1 (305 aa).

A sufficient for cleavage of ssRNA, ssDNA and Holliday junction DNA region spans residues 96–278; the sequence is SDKLLYQAKL…EDVLAAGEIQ (183 aa). Residues Glu141, His208, and Asp221 each contribute to the Mg(2+) site. Residues 278-305 form a disordered region; it reads QPPAPPEDAQPVAIPLPVSLGDAGHRSS.

The protein belongs to the CRISPR-associated endonuclease Cas1 family. Homodimer. Part of the Cas1-Cas2 complex. Interacts with RecB, RecC, RuvB, CasC and CasE. Forms a hexamer with 2 Cas1 dimers sandwiching a Cas2 dimer. The DNA lies across a flat surface extending from 1 Cas1 dimer, across the Cas2 dimer and contacting the other Cas1 dimer. Only 1 Cas1 protein from each dimer is catalytic, the other interacts with the Cas2 dimer and possibly target DNA. Mg(2+) is required as a cofactor.

It localises to the cytoplasm. Its activity is regulated as follows. Nuclease activity partially inhibited by CasE. Functionally, CRISPR (clustered regularly interspaced short palindromic repeat), is an adaptive immune system that provides protection against mobile genetic elements (viruses, transposable elements and conjugative plasmids). CRISPR clusters contain sequences complementary to antecedent mobile elements and target invading nucleic acids. CRISPR clusters are transcribed and processed into CRISPR RNA (crRNA). The Cas1-Cas2 complex is involved in CRISPR adaptation, the first stage of CRISPR immunity, being required for the addition/removal of CRISPR spacers at the leader end of the CRISPR locus. The Cas1-Cas2 complex introduces staggered nicks into both strands of the CRISPR array near the leader repeat and joins the 5'-ends of the repeat strands with the 3'-ends of the new spacer sequence. Spacer DNA integration requires supercoiled target DNA and 3'-OH ends on the inserted (spacer) DNA and probably initiates with a nucleophilic attack of the C 3'-OH end of the protospacer on the minus strand of the first repeat sequence. Expression of Cas1-Cas2 in a strain lacking both genes permits spacer acquisition. Non-specifically binds DNA; the Cas1-Cas2 complex preferentially binds CRISPR-locus DNA. Highest binding is seen to a dual forked DNA complex with 3'-overhangs and a protospacer-adjacent motif-complement specifically positioned. The protospacer DNA lies across a flat surface extending from 1 Cas1 dimer, across the Cas2 dimer and contacting the other Cas1 dimer; the 23 bp-long ds section of the DNA is bracketed by 1 Tyr-22 from each of the Cas1 dimers. Cas1 cuts within the 3'-overhang, to generate a 33-nucleotide DNA that is probably incorporated into the CRISPR leader by a cut-and-paste mechanism. Cas1 alone endonucleolytically cleaves linear ssRNA, ssDNA and short (34 base) dsDNA as well as branched DNA substrates such as Holliday junctions, replication forks and 5'-flap DNA substrates. In vitro catalyzes a concerted transesterification reaction on branched DNA, as would be expected during integration of protospacers into the CRISPR leader sequence; Cas2 is not required in vitro. This reaction requires a 3'-OH group at the branch point. Genetic interactions suggest Cas1 interacts with components of the RecBC and RuvB DNA repair systems. The sequence is that of CRISPR-associated endonuclease Cas1 (ygbT) from Escherichia coli (strain K12).